The chain runs to 414 residues: MSQANLSETLFKPRFKHPETSTLVRRFSAGKPQAMQSALSGNHVDHWYRLINRLMWIWRGVTPQEILDVQARIVMSEAERTDPELFDTVIGYRGGNWIFEWAKEAMQWQQKAGQEADPLLSGRHWLHASNLYSIAAYPHIKGDELAEQAQALANRAYEEAAQRLPGSLRELEFTIPGGSPITGFLHMPKGEGPFPTVLMCGGLDSLQTDYYNLYENYFSPLGIAMLTIDMPSIGFSSKWTLNQDTSLLHQHALRHLENVPWIDHTRVAAFGFRFGANIAVRLGYLEPQRLKAVACLGPVVHGLLVDPLHQGRVPEMYLDVLASRLGMHDASDEALRVELNRYSLKTQGLLGRRCPTPMLSGFWKDDPFSPEEESRLITSSSADGKLLEIPFNPVYRNFDHALRQIARWINHRFG.

The protein belongs to the FrsA family.

The enzyme catalyses a carboxylic ester + H2O = an alcohol + a carboxylate + H(+). In terms of biological role, catalyzes the hydrolysis of esters. This is Esterase FrsA from Klebsiella pneumoniae subsp. pneumoniae (strain ATCC 700721 / MGH 78578).